Reading from the N-terminus, the 236-residue chain is Small ribosomal subunit protein uS2c (236 aa).

This sequence belongs to the universal ribosomal protein uS2 family.

The protein localises to the plastid. The protein resides in the chloroplast. The sequence is that of Small ribosomal subunit protein uS2c (rps2) from Phalaenopsis aphrodite subsp. formosana (Moth orchid).